Here is a 172-residue protein sequence, read N- to C-terminus: 3-hydroxydecanoyl-[acyl-carrier-protein] dehydratase (172 aa).

H71 is a catalytic residue.

This sequence belongs to the thioester dehydratase family. FabA subfamily. Homodimer.

The protein resides in the cytoplasm. The enzyme catalyses a (3R)-hydroxyacyl-[ACP] = a (2E)-enoyl-[ACP] + H2O. The catalysed reaction is (3R)-hydroxydecanoyl-[ACP] = (2E)-decenoyl-[ACP] + H2O. It catalyses the reaction (2E)-decenoyl-[ACP] = (3Z)-decenoyl-[ACP]. It functions in the pathway lipid metabolism; fatty acid biosynthesis. In terms of biological role, necessary for the introduction of cis unsaturation into fatty acids. Catalyzes the dehydration of (3R)-3-hydroxydecanoyl-ACP to E-(2)-decenoyl-ACP and then its isomerization to Z-(3)-decenoyl-ACP. Can catalyze the dehydratase reaction for beta-hydroxyacyl-ACPs with saturated chain lengths up to 16:0, being most active on intermediate chain length. This Escherichia coli O6:K15:H31 (strain 536 / UPEC) protein is 3-hydroxydecanoyl-[acyl-carrier-protein] dehydratase.